Reading from the N-terminus, the 458-residue chain is UPF0210 protein MJ1665 (458 aa).

It belongs to the UPF0210 family.

The protein is UPF0210 protein MJ1665 of Methanocaldococcus jannaschii (strain ATCC 43067 / DSM 2661 / JAL-1 / JCM 10045 / NBRC 100440) (Methanococcus jannaschii).